Consider the following 468-residue polypeptide: Putative amidase AmiC (468 aa).

Residues Lys80 and Ser155 each act as charge relay system in the active site. Ser179 serves as the catalytic Acyl-ester intermediate.

This sequence belongs to the amidase family.

It carries out the reaction a monocarboxylic acid amide + H2O = a monocarboxylate + NH4(+). This is Putative amidase AmiC (amiC) from Mycobacterium leprae (strain TN).